We begin with the raw amino-acid sequence, 336 residues long: Casein kinase I isoform beta (336 aa).

Positions 17-285 constitute a Protein kinase domain; sequence YKLVREIGFG…YLRQLFRLLF (269 aa). Residues 23–31 and lysine 46 contribute to the ATP site; that span reads IGFGSFGHV. Aspartate 136 acts as the Proton acceptor in catalysis. Residues 309–320 are compositionally biased toward low complexity; that stretch reads ASSSSGEGQQAQ. The interval 309-336 is disordered; that stretch reads ASSSSGEGQQAQTPTGKSDNTKSEMKHS. Over residues 327–336 the composition is skewed to basic and acidic residues; that stretch reads DNTKSEMKHS.

The protein belongs to the protein kinase superfamily. CK1 Ser/Thr protein kinase family. Casein kinase I subfamily. In terms of assembly, monomer.

The protein resides in the cytoplasm. It catalyses the reaction L-seryl-[protein] + ATP = O-phospho-L-seryl-[protein] + ADP + H(+). The enzyme catalyses L-threonyl-[protein] + ATP = O-phospho-L-threonyl-[protein] + ADP + H(+). Its function is as follows. Casein kinases are operationally defined by their preferential utilization of acidic proteins such as caseins as substrates. It can phosphorylate a large number of proteins. Participates in Wnt signaling. The protein is Casein kinase I isoform beta (CSNK1B) of Bos taurus (Bovine).